The sequence spans 174 residues: Neuromedin-U (174 aa).

The N-terminal stretch at 1–37 (MSRAANRRPGLSAGQLAAATASPLLSLLLLLACCADA) is a signal peptide. The propeptide occupies 38–105 (CRGTPISPQR…EQTEKDNAKR (68 aa)). Methionine sulfoxide; partial is present on Met141. The residue at position 166 (Asn166) is an Asparagine amide. The propeptide occupies 170-174 (STSFI).

This sequence belongs to the NmU family. As to expression, expressed throughout the gastrointestinal tract with highest levels in the duodenum and jejunum. Low levels in spinal cord, hypothalamus, and stomach. Neuromedin-U-23: Expressed in the small intestine and the pituitary gland (at protein level). Neuromedin precursor-related peptides: Expressed in pituitary gland and small intestine (at protein level).

It localises to the secreted. Ligand for receptors NMUR1 and NMUR2. Receptor-binding is very tight if not irreversible and triggers an increase in the cytosolic Ca(2+) concentration. Stimulates muscle contractions of specific regions of the gastrointestinal tract. In rat, NMU stimulates contractions of stomach circular muscle. In terms of biological role, does not function as a ligand for either NMUR1 or NMUR2. Indirectly induces prolactin release although its potency is much lower than that of neuromedin precursor-related peptide 36. Functionally, does not function as a ligand for either NMUR1 or NMUR2. Indirectly induces prolactin release from lactotroph cells in the pituitary gland, probably via the hypothalamic dopaminergic system. The sequence is that of Neuromedin-U (Nmu) from Rattus norvegicus (Rat).